We begin with the raw amino-acid sequence, 447 residues long: MIEDNKENKENKDHSSERGRVTLIFSLENEVGGLIKVLKIFQENHVSLLHIESRKSKQRNSEFEIFVDCDISREQLNDIFPLLKSHATVLSVDSPDQLTAKEDVMETVPWFPKKISDLDFCANRVLLYGSELDADHPGFKDNVYRRRRKYFAELAMNYKHGDPIPKIEFTEEEIKTWGTIFRELNKLYPTHACREYLRNLPLLSKYCGYREDNIPQLEDVSNFLKERTGFSIRPVAGYLSPRDFLSGLAFRVFHCTQYVRHSSDPLYTPEPDTCHELLGHVPLLAEPSFAQFSQEIGLASLGASEETVQKLATCYFFTVEFGLCKQDGQLRVFGAGLLSSISELKHALSGHAKVKPFDPKIACKQECLITSFQDVYFVSESFEDAKEKMREFAKTVKRPFGLKYNPYTQSVQVLRDTKSITSAMNELRYDLDVISDALARVTRWPSV.

The ACT domain occupies 22–97; it reads TLIFSLENEV…TVLSVDSPDQ (76 aa). Ser-61 bears the Phosphoserine; by PKA mark. L-tryptophan is bound by residues Tyr-238, Arg-260, and Thr-268. Positions 275, 280, and 320 each coordinate Fe cation. Residues Ser-339 and Ile-369 each coordinate L-tryptophan.

Belongs to the biopterin-dependent aromatic amino acid hydroxylase family. In terms of assembly, homotetramer. Interacts with DNAJC12. Fe(2+) is required as a cofactor. Post-translationally, ubiquitinated, leading to its degradation by the proteasome. Ubiquitinated is triggered by phosphorylation. Phosphorylated; triggering degradation by the proteasome.

The catalysed reaction is (6R)-L-erythro-5,6,7,8-tetrahydrobiopterin + L-tryptophan + O2 = 5-hydroxy-L-tryptophan + (4aS,6R)-4a-hydroxy-L-erythro-5,6,7,8-tetrahydrobiopterin. It participates in aromatic compound metabolism; serotonin biosynthesis; serotonin from L-tryptophan: step 1/2. Its function is as follows. Oxidizes L-tryptophan to 5-hydroxy-l-tryptophan in the rate-determining step of serotonin biosynthesis. The polypeptide is Tryptophan 5-hydroxylase 1 (Mus musculus (Mouse)).